A 236-amino-acid polypeptide reads, in one-letter code: Phosphoribosylaminoimidazole-succinocarboxamide synthase (236 aa).

It belongs to the SAICAR synthetase family.

It carries out the reaction 5-amino-1-(5-phospho-D-ribosyl)imidazole-4-carboxylate + L-aspartate + ATP = (2S)-2-[5-amino-1-(5-phospho-beta-D-ribosyl)imidazole-4-carboxamido]succinate + ADP + phosphate + 2 H(+). It functions in the pathway purine metabolism; IMP biosynthesis via de novo pathway; 5-amino-1-(5-phospho-D-ribosyl)imidazole-4-carboxamide from 5-amino-1-(5-phospho-D-ribosyl)imidazole-4-carboxylate: step 1/2. This is Phosphoribosylaminoimidazole-succinocarboxamide synthase (purC) from Lactococcus lactis subsp. cremoris (Streptococcus cremoris).